The primary structure comprises 462 residues: MSQFPSSAIFTVSRLNQTVRQLLEMEMGQIWLSGEISNLSQPSSGHWYFTLKDERAQVRCAMFRTSNRRVTFRPQNGQQIIIRATITLYEPRGDYQLLAESMQPAGDGLLQQQFEQLKQRLAAEGLFDQQFKQVLPSPAKQVGVITSVSGAALHDILQVLQRRDPSLPVIVYPTSVQGAEAPLQIVRAIELANQRDECDVLIVGRGGGSLEDLWSFNDERVARAIFASRIPIVSAVGHETDVTIADFVGDLRAPTPSAAAELVSRNQLELLRQIQSQRQRLEMAMDYYLAQRNREFTRLHHRLQQQHPQLRLARQQAQLVKLRQRLDDAMQQQLRQTSRRSERLQQRLMQQQPQTRIHRAQQRLQQLSYQMQSAVDRQLNQNKQKLGVACSRLEGVSPLATLARGYNVTTASDGKVLKNVAQITPGETLKTRLQDGWVESQVTTLAPNLSSVKKRRKSSSQS.

Belongs to the XseA family. As to quaternary structure, heterooligomer composed of large and small subunits.

It localises to the cytoplasm. It carries out the reaction Exonucleolytic cleavage in either 5'- to 3'- or 3'- to 5'-direction to yield nucleoside 5'-phosphates.. In terms of biological role, bidirectionally degrades single-stranded DNA into large acid-insoluble oligonucleotides, which are then degraded further into small acid-soluble oligonucleotides. The polypeptide is Exodeoxyribonuclease 7 large subunit (Pectobacterium atrosepticum (strain SCRI 1043 / ATCC BAA-672) (Erwinia carotovora subsp. atroseptica)).